A 400-amino-acid chain; its full sequence is Cysteine desulfurase (400 aa).

Pyridoxal 5'-phosphate contacts are provided by residues 71-72, N150, Q178, and 198-200; these read GT and SGH. N6-(pyridoxal phosphate)lysine is present on K201. Position 236 (T236) interacts with pyridoxal 5'-phosphate. C324 (cysteine persulfide intermediate) is an active-site residue. C324 provides a ligand contact to [2Fe-2S] cluster.

Belongs to the class-V pyridoxal-phosphate-dependent aminotransferase family. NifS/IscS subfamily. In terms of assembly, homodimer. Pyridoxal 5'-phosphate is required as a cofactor.

The catalysed reaction is (sulfur carrier)-H + L-cysteine = (sulfur carrier)-SH + L-alanine. Functionally, catalyzes the removal of elemental sulfur atoms from cysteine to produce alanine. Seems to participate in the biosynthesis of the nitrogenase metalloclusters by providing the inorganic sulfur required for the Fe-S core formation. In Nostoc sp. (strain PCC 7120 / SAG 25.82 / UTEX 2576), this protein is Cysteine desulfurase.